We begin with the raw amino-acid sequence, 325 residues long: Replication factor C small subunit (325 aa).

54–61 (GPAGTGKT) lines the ATP pocket.

Belongs to the activator 1 small subunits family. RfcS subfamily. In terms of assembly, heteromultimer composed of small subunits (RfcS) and large subunits (RfcL).

In terms of biological role, part of the RFC clamp loader complex which loads the PCNA sliding clamp onto DNA. This Haloarcula marismortui (strain ATCC 43049 / DSM 3752 / JCM 8966 / VKM B-1809) (Halobacterium marismortui) protein is Replication factor C small subunit.